Here is a 662-residue protein sequence, read N- to C-terminus: MKEENSQAHYLALCRELEDHDYSYYVLHRPRISDYEYDMKLRKLLEIERSHPEWKVLWSPSTRLGDRPSGTFSVVSHKEPMLSIANSYSKEELSEFFSRVEKSLGTSPRYTVELKIDGIAVAIRYEDRVLVQALSRGNGKQGEDITSNIRTIRSLPLRLPEDAPEFIEVRGEVFFSYSTFQIINEKQQQLEKTIFANPRNAAGGTLKLLSPQEVAKRKLEISIYNLIAPGDNDSHYENLQRCLEWGFPVSGKPRLCSTPEEVISVLKTIETERASLPMEIDGAVIKVDSLASQRVLGATGKHYRWALAYKYAPEEAETLLEDILVQVGRTGVLTPVAKLTPVLLSGSLVSRASLYNEDEIHRKDIRIGDTVCVAKGGEVIPKVVRVCREKRPEGSEVWNMPEFCPVCHSHVVREEDRVSVRCVNPECVAGAIEKIRFFVGRGALNIDHLGVKVITKLFELGLVHTCADLFQLTTEDLMQIPGIRERSARNILESIEQAKHVDLDRFLVALGIPLIGIGVATVLAGHFETLDRVISATFEELLSLEGIGEKVAHAIAEYFSDSTHLNEIKKMQDLGVCISPYHKSGSTCFGKAFVITGTLEGMSRLDAETAIRNCGGKVGSSVSKQTDYVVMGNNPGSKLEKARKLGVSILDQEAFTNLIHLE.

NAD(+)-binding positions include 34–38, 83–84, and Glu113; these read DYEYD and SI. Lys115 (N6-AMP-lysine intermediate) is an active-site residue. 4 residues coordinate NAD(+): Arg136, Glu172, Lys286, and Lys310. Positions 404, 407, 422, and 427 each coordinate Zn(2+). In terms of domain architecture, BRCT spans 583-662; sequence KSGSTCFGKA…EAFTNLIHLE (80 aa).

This sequence belongs to the NAD-dependent DNA ligase family. LigA subfamily. The cofactor is Mg(2+). Requires Mn(2+) as cofactor.

It catalyses the reaction NAD(+) + (deoxyribonucleotide)n-3'-hydroxyl + 5'-phospho-(deoxyribonucleotide)m = (deoxyribonucleotide)n+m + AMP + beta-nicotinamide D-nucleotide.. In terms of biological role, DNA ligase that catalyzes the formation of phosphodiester linkages between 5'-phosphoryl and 3'-hydroxyl groups in double-stranded DNA using NAD as a coenzyme and as the energy source for the reaction. It is essential for DNA replication and repair of damaged DNA. The chain is DNA ligase from Chlamydia pneumoniae (Chlamydophila pneumoniae).